A 185-amino-acid chain; its full sequence is Biofilm operon icaADBC HTH-type negative transcriptional regulator IcaR (185 aa).

In terms of domain architecture, HTH tetR-type spans 1-59; the sequence is MKDKIIDNAITLFSEKGYDGTTLDDISKSVNIKKASLYYHYDNKEEIYRKSVENCFNYF. Residues 22–41 constitute a DNA-binding region (H-T-H motif); it reads TLDDISKSVNIKKASLYYHY.

As to quaternary structure, homodimer.

Represses transcription of the icaADBC operon necessary for biofilm production. The protein is Biofilm operon icaADBC HTH-type negative transcriptional regulator IcaR (icaR) of Staphylococcus epidermidis (strain ATCC 35984 / DSM 28319 / BCRC 17069 / CCUG 31568 / BM 3577 / RP62A).